The chain runs to 446 residues: Histidine--tRNA ligase (446 aa).

The protein belongs to the class-II aminoacyl-tRNA synthetase family. In terms of assembly, homodimer.

Its subcellular location is the cytoplasm. It catalyses the reaction tRNA(His) + L-histidine + ATP = L-histidyl-tRNA(His) + AMP + diphosphate + H(+). The protein is Histidine--tRNA ligase of Burkholderia pseudomallei (strain 668).